A 170-amino-acid polypeptide reads, in one-letter code: Cathelicidin antimicrobial peptide (170 aa).

A signal peptide spans Met1–Ala30. Residues Gln31–Arg131 constitute a propeptide, cathelin-like domain (CLD). Disulfide bonds link Cys86–Cys97 and Cys108–Cys125. Residues Phe150–Gln162 form an active core region.

It belongs to the cathelicidin family. As to quaternary structure, monomer, homodimer or homotrimer (in vitro). Oligomerizes as tetra- or hexamer in solution (in vitro). Post-translationally, proteolytically cleaved by proteinase PRTN3 into antibacterial peptide LL-37. Proteolytically cleaved by cathepsin CTSG and neutrophil elastase ELANE. In terms of processing, resistant to proteolytic degradation in solution, and when bound to both zwitterionic (mimicking mammalian membranes) and negatively charged membranes (mimicking bacterial membranes). After secretion onto the skin surface, the CAMP gene product is processed by a serine protease-dependent mechanism into multiple novel antimicrobial peptides distinct from and shorter than cathelicidin LL-37. These peptides show enhanced antimicrobial action, acquiring the ability to kill skin pathogens such as S.aureus, E.coli and C.albicans. These peptides have lost the ability to stimulate CXCL8/IL8 release from keratinocytes. The peptides act synergistically, killing bacteria at lower concentrations when present together, and maintain activity at increased salt condition.

It localises to the secreted. It is found in the vesicle. Antimicrobial protein that is an integral component of the innate immune system. Binds to bacterial lipopolysaccharides (LPS). Acts via neutrophil N-formyl peptide receptors to enhance the release of CXCL2. Postsecretory processing generates multiple cathelicidin antimicrobial peptides with various lengths which act as a topical antimicrobial defense in sweat on skin. The unprocessed precursor form, cathelicidin antimicrobial peptide, inhibits the growth of Gram-negative E.coli and E.aerogenes with efficiencies comparable to that of the mature peptide LL-37 (in vitro). In terms of biological role, antimicrobial peptide that is an integral component of the innate immune system. Binds to bacterial lipopolysaccharides (LPS). Causes membrane permeabilization by forming transmembrane pores (in vitro). Causes lysis of E.coli. Exhibits antimicrobial activity against Gram-negative bacteria such as P.aeruginosa, S.typhimurium, E.aerogenes, E.coli and P.syringae, Gram-positive bacteria such as L.monocytogenes, S.epidermidis, S.pyogenes and S.aureus, as well as vancomycin-resistant enterococci (in vitro). Exhibits antimicrobial activity against methicillin-resistant S.aureus, P.mirabilis, and C.albicans in low-salt media, but not in media containing 100 mM NaCl (in vitro). Forms chiral supramolecular assemblies with quinolone signal (PQS) molecules of P.aeruginosa, which may lead to interference of bacterial quorum signaling and perturbance of bacterial biofilm formation. May form supramolecular fiber-like assemblies on bacterial membranes. Induces cytokine and chemokine producation as well as TNF/TNFA and CSF2/GMCSF production in normal human keratinocytes. Exhibits hemolytic activity against red blood cells. Functionally, exhibits antimicrobial activity against E.coli and B.megaterium (in vitro). This chain is Cathelicidin antimicrobial peptide, found in Nomascus leucogenys (Northern white-cheeked gibbon).